Consider the following 360-residue polypeptide: Protein Wnt-2 (360 aa).

A signal peptide spans 1–25; that stretch reads MNAPLGGIWLGLPLLLTWLSPEVSS. 11 disulfide bridges follow: C76/C87, C127/C135, C137/C157, C206/C220, C208/C215, C278/C309, C294/C304, C308/C348, C324/C339, C326/C336, and C331/C332. A lipid anchor (O-palmitoleoyl serine; by PORCN) is attached at S212. Residue N295 is glycosylated (N-linked (GlcNAc...) asparagine).

It belongs to the Wnt family. Post-translationally, palmitoleoylation is required for efficient binding to frizzled receptors. Depalmitoleoylation leads to Wnt signaling pathway inhibition.

The protein localises to the secreted. It localises to the extracellular space. It is found in the extracellular matrix. Ligand for members of the frizzled family of seven transmembrane receptors. Probable developmental protein. May be a signaling molecule which affects the development of discrete regions of tissues. Is likely to signal over only few cell diameters. This is Protein Wnt-2 (WNT2) from Oryctolagus cuniculus (Rabbit).